The chain runs to 79 residues: MENIEQRVKKIVAEQLGVNEAEVKNESSFVDDLGADSLDTVELVMALEEEFECEIPDEEAEKITTVQQAIDYVTAHLDK.

One can recognise a Carrier domain in the interval 2 to 77 (ENIEQRVKKI…QAIDYVTAHL (76 aa)). Serine 37 carries the post-translational modification O-(pantetheine 4'-phosphoryl)serine.

It belongs to the acyl carrier protein (ACP) family. Post-translationally, 4'-phosphopantetheine is transferred from CoA to a specific serine of apo-ACP by AcpS. This modification is essential for activity because fatty acids are bound in thioester linkage to the sulfhydryl of the prosthetic group.

It localises to the cytoplasm. It participates in lipid metabolism; fatty acid biosynthesis. Its function is as follows. Carrier of the growing fatty acid chain in fatty acid biosynthesis. This chain is Acyl carrier protein, found in Laribacter hongkongensis (strain HLHK9).